We begin with the raw amino-acid sequence, 443 residues long: Glutamyl-tRNA reductase (443 aa).

Substrate contacts are provided by residues 49–52 (TCNR), Ser-109, 114–116 (ETQ), and Gln-120. Cys-50 serves as the catalytic Nucleophile. Position 189–194 (189–194 (GAGEMS)) interacts with NADP(+).

It belongs to the glutamyl-tRNA reductase family. As to quaternary structure, homodimer.

The catalysed reaction is (S)-4-amino-5-oxopentanoate + tRNA(Glu) + NADP(+) = L-glutamyl-tRNA(Glu) + NADPH + H(+). The protein operates within porphyrin-containing compound metabolism; protoporphyrin-IX biosynthesis; 5-aminolevulinate from L-glutamyl-tRNA(Glu): step 1/2. In terms of biological role, catalyzes the NADPH-dependent reduction of glutamyl-tRNA(Glu) to glutamate 1-semialdehyde (GSA). The polypeptide is Glutamyl-tRNA reductase (Desulfitobacterium hafniense (strain DSM 10664 / DCB-2)).